The following is a 692-amino-acid chain: Elongation factor G (692 aa).

Residues E8–T283 form the tr-type G domain. GTP-binding positions include A17–T24, D81–H85, and N135–D138.

The protein belongs to the TRAFAC class translation factor GTPase superfamily. Classic translation factor GTPase family. EF-G/EF-2 subfamily.

It is found in the cytoplasm. Its function is as follows. Catalyzes the GTP-dependent ribosomal translocation step during translation elongation. During this step, the ribosome changes from the pre-translocational (PRE) to the post-translocational (POST) state as the newly formed A-site-bound peptidyl-tRNA and P-site-bound deacylated tRNA move to the P and E sites, respectively. Catalyzes the coordinated movement of the two tRNA molecules, the mRNA and conformational changes in the ribosome. The chain is Elongation factor G from Nitratiruptor sp. (strain SB155-2).